A 691-amino-acid chain; its full sequence is Protein vreteno (691 aa).

Positions 128–155 (QKEREITSDPVTSTEPMPTPGPAISATE) are disordered. Tudor domains lie at 366 to 427 (KLQS…LAGL) and 573 to 630 (APPI…FIFP).

As to quaternary structure, interacts with aub and piwi. Gonad-specific.

The protein resides in the cytoplasm. It localises to the cytoplasmic ribonucleoprotein granule. Functionally, gonad-specific protein essential for germline development to repress transposable elements and preventing their mobilization, which is essential for the germline integrity. Acts via the piRNA metabolic process in both germline and somatic gonadal tissues by mediating the repression of transposable elements during meiosis. Required for primary piRNA biogenesis in both germline and somatic gonadal tissues. The sequence is that of Protein vreteno (vret) from Drosophila melanogaster (Fruit fly).